We begin with the raw amino-acid sequence, 360 residues long: MPTPLSLQTLAKKLLATQYISKDYYFILKYCGLWWHGAPIMLSTNEDNQLMIKSASFKEGLSLDLALMKVVQENNHDLIKLFTEWGADINSSLVTVNMECTRNLCRELGAKEALNERDILQIFYKTRDIKTSSHVILCHELLSNNPLFQNIERMRSIIYRSLEKLSINFILDDISFSEMLTRHWYGLAILYNLTEAIQYFYEKYKHFKNWRLICGLSFNNLSDLYEIYNLEKVDMDIDEMMYLACSMYGGNYSTIYYCFVLGADINQAMLTSVINHHIDNLFFCIDLGADAFEESMELAKQKNHNILVHILSFKNYSPDFSLLSLKMTDPEKINALLDEEKYESKNMLMYDEFDACTNNL.

Belongs to the asfivirus MGF 360 family.

In terms of biological role, plays a role in virus cell tropism, and may be required for efficient virus replication in macrophages. The chain is Protein MGF 360-2L from Ornithodoros (relapsing fever ticks).